The primary structure comprises 247 residues: Putative ankyrin repeat protein RBE_1110 (247 aa).

2 ANK repeats span residues 105 to 135 and 139 to 171; these read QNKDVFYQAVMSNKKKLVKKILSYNPKCIDY and EGHNVLHIALKNKAKADAEMIEILLQCKPKLIT.

This is Putative ankyrin repeat protein RBE_1110 from Rickettsia bellii (strain RML369-C).